Consider the following 89-residue polypeptide: Small ribosomal subunit protein uS15 (89 aa).

Belongs to the universal ribosomal protein uS15 family. Part of the 30S ribosomal subunit. Forms a bridge to the 50S subunit in the 70S ribosome, contacting the 23S rRNA.

Its function is as follows. One of the primary rRNA binding proteins, it binds directly to 16S rRNA where it helps nucleate assembly of the platform of the 30S subunit by binding and bridging several RNA helices of the 16S rRNA. Forms an intersubunit bridge (bridge B4) with the 23S rRNA of the 50S subunit in the ribosome. The chain is Small ribosomal subunit protein uS15 from Geobacillus thermodenitrificans (strain NG80-2).